We begin with the raw amino-acid sequence, 390 residues long: Putative 8-amino-7-oxononanoate synthase (390 aa).

Arg-20 contacts substrate. Residue 107 to 108 (GY) participates in pyridoxal 5'-phosphate binding. His-132 contacts substrate. Pyridoxal 5'-phosphate is bound by residues Ser-181, 206-209 (DDAH), and 237-240 (TLGK). An N6-(pyridoxal phosphate)lysine modification is found at Lys-240. Thr-356 serves as a coordination point for substrate.

The protein belongs to the class-II pyridoxal-phosphate-dependent aminotransferase family. BioF subfamily. Homodimer. Pyridoxal 5'-phosphate is required as a cofactor.

It carries out the reaction 6-carboxyhexanoyl-[ACP] + L-alanine + H(+) = (8S)-8-amino-7-oxononanoate + holo-[ACP] + CO2. It functions in the pathway cofactor biosynthesis; biotin biosynthesis. In terms of biological role, catalyzes the decarboxylative condensation of pimeloyl-[acyl-carrier protein] and L-alanine to produce 8-amino-7-oxononanoate (AON), [acyl-carrier protein], and carbon dioxide. This chain is Putative 8-amino-7-oxononanoate synthase (bioF), found in Syntrophotalea carbinolica (strain DSM 2380 / NBRC 103641 / GraBd1) (Pelobacter carbinolicus).